The chain runs to 256 residues: Bialaphos biosynthetic pathway regulatory protein (256 aa).

Residues 184-249 (ETADAIDVSD…QLGARAAECR (66 aa)) enclose the HTH luxR-type domain. A DNA-binding region (H-T-H motif) is located at residues 208-227 (DVAMARSLGISTRTLRRVIT).

In terms of biological role, involved in the regulation of the biosynthesis of phosphinothricin tripeptide (PTT), also known as bialaphos (BA), a natural-product antibiotic and potent herbicide. The chain is Bialaphos biosynthetic pathway regulatory protein (brpA) from Streptomyces hygroscopicus.